Here is a 168-residue protein sequence, read N- to C-terminus: Small ribosomal subunit protein uS5 (168 aa).

Residues 13-76 enclose the S5 DRBM domain; the sequence is LEENVVAINR…EDAKRKLITV (64 aa).

The protein belongs to the universal ribosomal protein uS5 family. As to quaternary structure, part of the 30S ribosomal subunit. Contacts proteins S4 and S8.

Its function is as follows. With S4 and S12 plays an important role in translational accuracy. Located at the back of the 30S subunit body where it stabilizes the conformation of the head with respect to the body. The polypeptide is Small ribosomal subunit protein uS5 (Leuconostoc mesenteroides subsp. mesenteroides (strain ATCC 8293 / DSM 20343 / BCRC 11652 / CCM 1803 / JCM 6124 / NCDO 523 / NBRC 100496 / NCIMB 8023 / NCTC 12954 / NRRL B-1118 / 37Y)).